The following is a 348-amino-acid chain: Probable dual-specificity RNA methyltransferase RlmN (348 aa).

Catalysis depends on Glu-93, which acts as the Proton acceptor. The region spanning 99 to 333 (TEKRLTACLS…VSLRKSRGLD (235 aa)) is the Radical SAM core domain. A disulfide bridge links Cys-106 with Cys-338. Residues Cys-113, Cys-117, and Cys-120 each contribute to the [4Fe-4S] cluster site. Residues 160–161 (GE), Ser-190, 219–221 (SLH), and Asn-295 each bind S-adenosyl-L-methionine. Cys-338 serves as the catalytic S-methylcysteine intermediate.

It belongs to the radical SAM superfamily. RlmN family. [4Fe-4S] cluster serves as cofactor.

It is found in the cytoplasm. The enzyme catalyses adenosine(2503) in 23S rRNA + 2 reduced [2Fe-2S]-[ferredoxin] + 2 S-adenosyl-L-methionine = 2-methyladenosine(2503) in 23S rRNA + 5'-deoxyadenosine + L-methionine + 2 oxidized [2Fe-2S]-[ferredoxin] + S-adenosyl-L-homocysteine. It catalyses the reaction adenosine(37) in tRNA + 2 reduced [2Fe-2S]-[ferredoxin] + 2 S-adenosyl-L-methionine = 2-methyladenosine(37) in tRNA + 5'-deoxyadenosine + L-methionine + 2 oxidized [2Fe-2S]-[ferredoxin] + S-adenosyl-L-homocysteine. Its function is as follows. Specifically methylates position 2 of adenine 2503 in 23S rRNA and position 2 of adenine 37 in tRNAs. This is Probable dual-specificity RNA methyltransferase RlmN from Prochlorococcus marinus (strain MIT 9215).